A 65-amino-acid chain; its full sequence is Large ribosomal subunit protein uL29 (65 aa).

It belongs to the universal ribosomal protein uL29 family.

This chain is Large ribosomal subunit protein uL29, found in Acidovorax ebreus (strain TPSY) (Diaphorobacter sp. (strain TPSY)).